The chain runs to 145 residues: Phospholipase A2 (145 aa).

The first 15 residues, 1–15, serve as a signal peptide directing secretion; that stretch reads MRLLVLAALLTVGAG. Gln16 bears the Pyrrolidone carboxylic acid mark. Positions 16–22 are cleaved as a propeptide — removed by trypsin; sequence QAGLNSR. 7 cysteine pairs are disulfide-bonded: Cys33–Cys99, Cys49–Cys145, Cys51–Cys67, Cys66–Cys127, Cys73–Cys120, Cys83–Cys113, and Cys106–Cys118. Tyr50, Gly52, and Gly54 together coordinate Ca(2+). The active site involves His70. Residue Asp71 participates in Ca(2+) binding. Residue Asp121 is part of the active site.

The protein belongs to the phospholipase A2 family. As to quaternary structure, monomer or homodimer. Ca(2+) serves as cofactor. Post-translationally, activated by trypsin cleavage in the duodenum. Can also be activated by thrombin or autocatalytically.

The protein resides in the secreted. It carries out the reaction a 1,2-diacyl-sn-glycero-3-phosphocholine + H2O = a 1-acyl-sn-glycero-3-phosphocholine + a fatty acid + H(+). The catalysed reaction is 1,2-ditetradecanoyl-sn-glycero-3-phosphocholine + H2O = 1-tetradecanoyl-sn-glycero-3-phosphocholine + tetradecanoate + H(+). It catalyses the reaction 1,2-dihexadecanoyl-sn-glycero-3-phosphocholine + H2O = 1-hexadecanoyl-sn-glycero-3-phosphocholine + hexadecanoate + H(+). The enzyme catalyses 1-hexadecanoyl-2-(9Z-octadecenoyl)-sn-glycero-3-phosphocholine + H2O = 1-hexadecanoyl-sn-glycero-3-phosphocholine + (9Z)-octadecenoate + H(+). It carries out the reaction 1-hexadecanoyl-2-(5Z,8Z,11Z,14Z-eicosatetraenoyl)-sn-glycero-3-phosphocholine + H2O = 1-hexadecanoyl-sn-glycero-3-phosphocholine + (5Z,8Z,11Z,14Z)-eicosatetraenoate + H(+). The catalysed reaction is 1-hexadecanoyl-2-(9Z-octadecenoyl)-sn-glycero-3-phospho-(1'-sn-glycerol) + H2O = 1-hexadecanoyl-sn-glycero-3-phospho-(1'-sn-glycerol) + (9Z)-octadecenoate + H(+). It catalyses the reaction N-hexadecanoyl-1,2-di-(9Z-octadecenoyl)-sn-glycero-3-phosphoethanolamine + H2O = N-hexadecanoyl-1-(9Z-octadecenoyl)-sn-glycero-3-phosphoethanolamine + (9Z)-octadecenoate + H(+). The enzyme catalyses 1-hexadecanoyl-2-(9Z,12Z-octadecadienoyl)-sn-glycero-3-phosphoethanolamine + H2O = 1-hexadecanoyl-sn-glycero-3-phosphoethanolamine + (9Z,12Z)-octadecadienoate + H(+). It carries out the reaction N,1-dihexadecanoyl-2-(9Z,12Z-octadecadienoyl)-sn-glycero-3-phosphoethanolamine + H2O = N,1-dihexadecanoyl-sn-glycero-3-phosphoethanolamine + (9Z,12Z)-octadecadienoate + H(+). In terms of biological role, secretory calcium-dependent phospholipase A2 that primarily targets dietary phospholipids in the intestinal tract. Hydrolyzes the ester bond of the fatty acyl group attached at sn-2 position of phospholipids (phospholipase A2 activity) with preference for phosphatidylethanolamines and phosphatidylglycerols over phosphatidylcholines. May play a role in the biosynthesis of N-acyl ethanolamines that regulate energy metabolism and inflammation in the intestinal tract. Hydrolyzes N-acyl phosphatidylethanolamines to N-acyl lysophosphatidylethanolamines, which are further cleaved by a lysophospholipase D to release N-acyl ethanolamines. May act in an autocrine and paracrine manner. Has anti-helminth activity in a process regulated by gut microbiota. Upon helminth infection of intestinal epithelia, directly affects phosphatidylethanolamine contents in the membrane of helminth larvae, likely controlling an array of phospholipid-mediated cellular processes such as membrane fusion and cell division while providing for better immune recognition, ultimately reducing larvae integrity and infectivity. The sequence is that of Phospholipase A2 (PLA2G1B) from Bos taurus (Bovine).